Consider the following 88-residue polypeptide: Carboxysome shell vertex protein CsoS4A (88 aa).

A BMV domain is found at 1 to 76 (MLICKVLKPL…SDLTIVGIID (76 aa)).

It belongs to the CcmL/EutN family. CsoS4 subfamily. As to quaternary structure, homopentamer.

It is found in the carboxysome. In terms of biological role, probably forms vertices in the carboxysome, a polyhedral inclusion where RuBisCO (ribulose bisphosphate carboxylase, cbbL-cbbS) is sequestered. Has been modeled to induce curvature upon insertion into an otherwise flat hexagonal layer of major carboxysome subunits. Has not been identified in purified carboxysomes; it is expected to be present in very low amounts. The protein is Carboxysome shell vertex protein CsoS4A of Prochlorococcus marinus subsp. pastoris (strain CCMP1986 / NIES-2087 / MED4).